Consider the following 698-residue polypeptide: Endogenous retrovirus group K member 21 Env polyprotein (698 aa).

The interval 1 to 25 is disordered; that stretch reads MHPSEMQRKAPPRRRRHRNRAPLTH. Residues 1–88 form the signal peptide; that stretch reads MHPSEMQRKA…ALMIVSMVVS (88 aa). The segment covering 10 to 20 has biased composition (basic residues); that stretch reads APPRRRRHRNR. Residues 89-631 lie on the Extracellular side of the membrane; that stretch reads LPMPAGAAAA…NLNPVTWVKT (543 aa). N-linked (GlcNAc...) asparagine glycosylation is found at Asn99, Asn127, Asn152, Asn273, Asn354, Asn371, and Asn460. The interval 465 to 485 is fusion peptide; that stretch reads FIFTLIAVIMGLIAVTAMAAV. N-linked (GlcNAc...) asparagine glycosylation is found at Asn506, Asn553, Asn565, and Asn584. Residues 632 to 652 traverse the membrane as a helical segment; sequence IGSTTIINLILILVCLFCLLL. Residues 653–698 are Cytoplasmic-facing; sequence VCRCTQQLRRDSDHRERAMMTMVVLSKRKGGNVGKSKRDQIVTVSV.

This sequence belongs to the beta type-B retroviral envelope protein family. HERV class-II K(HML-2) env subfamily. The surface (SU) and transmembrane (TM) proteins form a heterodimer. SU and TM are attached by noncovalent interactions or by a labile interchain disulfide bond. In terms of processing, specific enzymatic cleavages in vivo yield the mature SU and TM proteins.

The protein resides in the cell membrane. The protein localises to the virion. Functionally, retroviral envelope proteins mediate receptor recognition and membrane fusion during early infection. Endogenous envelope proteins may have kept, lost or modified their original function during evolution. This endogenous envelope protein has lost its original fusogenic properties. Its function is as follows. SU mediates receptor recognition. In terms of biological role, TM anchors the envelope heterodimer to the viral membrane through one transmembrane domain. The other hydrophobic domain, called fusion peptide, mediates fusion of the viral membrane with the target cell membrane. This is Endogenous retrovirus group K member 21 Env polyprotein (ERVK-21) from Homo sapiens (Human).